Consider the following 283-residue polypeptide: Vitamin K epoxide reductase homolog (283 aa).

The Cytoplasmic portion of the chain corresponds to 1–20 (MASYLKLKAQEETWLQRHSR). Residues 21–41 (LILAILAGLGSLLTAYLTYTK) traverse the membrane as a helical segment. The Periplasmic segment spans residues 42–66 (LTEQPAAFCTGDGGCDLVLSSRWAE). Cys-50 and Cys-56 form a disulfide bridge. 59-65 (VLSSRWA) serves as a coordination point for a quinone. Residues 67–87 (FLGIPTAAVGLLGFLGVLALA) traverse the membrane as a helical segment. The Cytoplasmic portion of the chain corresponds to 88-102 (VLPDGLPLVKRWRWP). A helical membrane pass occupies residues 103–123 (ALFGLVSAMTAFEMYMLYLMV). 111-122 (MTAFEMYMLYLM) contacts a quinone. At 124–128 (AVLRQ) the chain is on the periplasmic side. Residues 129-149 (FCMYCTTAIILVAGLGLVTVL) traverse the membrane as a helical segment. An intrachain disulfide couples Cys-130 to Cys-133. The Cytoplasmic portion of the chain corresponds to 150–158 (GHRWLDGGK). A helical membrane pass occupies residues 159 to 179 (LAFSYILVAFLTLVTTIGVYA). Over 180–283 (NQVPPPSPLA…ASGYPLEEGR (104 aa)) the chain is Periplasmic. The interval 186–283 (SPLAVGLAAH…ASGYPLEEGR (98 aa)) is thioredoxin-like domain. Cystine bridges form between Cys-209-Cys-212 and Cys-231-Cys-244.

It belongs to the VKOR family.

It localises to the membrane. With respect to regulation, inhibited by ferulenol. Thiol-disulfide oxidoreductase that catalyzes vitamin K-dependent disulfide bond formation in periplasmic target proteins. This chain is Vitamin K epoxide reductase homolog, found in Synechococcus sp. (strain JA-2-3B'a(2-13)) (Cyanobacteria bacterium Yellowstone B-Prime).